Consider the following 173-residue polypeptide: Large ribosomal subunit protein uL10 (173 aa).

It belongs to the universal ribosomal protein uL10 family. As to quaternary structure, part of the ribosomal stalk of the 50S ribosomal subunit. The N-terminus interacts with L11 and the large rRNA to form the base of the stalk. The C-terminus forms an elongated spine to which L12 dimers bind in a sequential fashion forming a multimeric L10(L12)X complex.

In terms of biological role, forms part of the ribosomal stalk, playing a central role in the interaction of the ribosome with GTP-bound translation factors. This chain is Large ribosomal subunit protein uL10, found in Chlorobium phaeobacteroides (strain BS1).